Here is a 411-residue protein sequence, read N- to C-terminus: Dihydrofolate synthase/folylpolyglutamate synthase (411 aa).

Position 53–56 (53–56 (GKGT)) interacts with ATP. Mg(2+) is bound at residue Ser77. Residues 116–119 (TYFE) and 147–149 (LDA) contribute to the 7,8-dihydropteroate site. His167 lines the Mg(2+) pocket. 2 residues coordinate ATP: Arg283 and Asp296.

This sequence belongs to the folylpolyglutamate synthase family. As to quaternary structure, monomer. Requires Mg(2+) as cofactor.

The enzyme catalyses 7,8-dihydropteroate + L-glutamate + ATP = 7,8-dihydrofolate + ADP + phosphate + H(+). It carries out the reaction (6S)-5,6,7,8-tetrahydrofolyl-(gamma-L-Glu)(n) + L-glutamate + ATP = (6S)-5,6,7,8-tetrahydrofolyl-(gamma-L-Glu)(n+1) + ADP + phosphate + H(+). The catalysed reaction is 10-formyltetrahydrofolyl-(gamma-L-Glu)(n) + L-glutamate + ATP = 10-formyltetrahydrofolyl-(gamma-L-Glu)(n+1) + ADP + phosphate + H(+). It catalyses the reaction (6R)-5,10-methylenetetrahydrofolyl-(gamma-L-Glu)(n) + L-glutamate + ATP = (6R)-5,10-methylenetetrahydrofolyl-(gamma-L-Glu)(n+1) + ADP + phosphate + H(+). It functions in the pathway cofactor biosynthesis; tetrahydrofolate biosynthesis; 7,8-dihydrofolate from 2-amino-4-hydroxy-6-hydroxymethyl-7,8-dihydropteridine diphosphate and 4-aminobenzoate: step 2/2. The protein operates within cofactor biosynthesis; tetrahydrofolylpolyglutamate biosynthesis. Functionally, functions in two distinct reactions of the de novo folate biosynthetic pathway. Catalyzes the addition of a glutamate residue to dihydropteroate (7,8-dihydropteroate or H2Pte) to form dihydrofolate (7,8-dihydrofolate monoglutamate or H2Pte-Glu). Also catalyzes successive additions of L-glutamate to tetrahydrofolate or 10-formyltetrahydrofolate or 5,10-methylenetetrahydrofolate, leading to folylpolyglutamate derivatives. The chain is Dihydrofolate synthase/folylpolyglutamate synthase (folC) from Buchnera aphidicola subsp. Acyrthosiphon pisum (strain APS) (Acyrthosiphon pisum symbiotic bacterium).